Here is a 355-residue protein sequence, read N- to C-terminus: Protein-glutamate methylesterase/protein-glutamine glutaminase 3 (355 aa).

Residues K5 to R122 form the Response regulatory domain. The residue at position 56 (D56) is a 4-aspartylphosphate. The CheB-type methylesterase domain maps to I165–G355. Residues S177, H203, and D299 contribute to the active site.

Belongs to the CheB family. Phosphorylated by CheA. Phosphorylation of the N-terminal regulatory domain activates the methylesterase activity.

Its subcellular location is the cytoplasm. The catalysed reaction is [protein]-L-glutamate 5-O-methyl ester + H2O = L-glutamyl-[protein] + methanol + H(+). The enzyme catalyses L-glutaminyl-[protein] + H2O = L-glutamyl-[protein] + NH4(+). Involved in chemotaxis. Part of a chemotaxis signal transduction system that modulates chemotaxis in response to various stimuli. Catalyzes the demethylation of specific methylglutamate residues introduced into the chemoreceptors (methyl-accepting chemotaxis proteins or MCP) by CheR. Also mediates the irreversible deamidation of specific glutamine residues to glutamic acid. The polypeptide is Protein-glutamate methylesterase/protein-glutamine glutaminase 3 (Geobacter metallireducens (strain ATCC 53774 / DSM 7210 / GS-15)).